Here is a 363-residue protein sequence, read N- to C-terminus: S-adenosylmethionine:tRNA ribosyltransferase-isomerase (363 aa).

It belongs to the QueA family. In terms of assembly, monomer.

It localises to the cytoplasm. The enzyme catalyses 7-aminomethyl-7-carbaguanosine(34) in tRNA + S-adenosyl-L-methionine = epoxyqueuosine(34) in tRNA + adenine + L-methionine + 2 H(+). It participates in tRNA modification; tRNA-queuosine biosynthesis. Transfers and isomerizes the ribose moiety from AdoMet to the 7-aminomethyl group of 7-deazaguanine (preQ1-tRNA) to give epoxyqueuosine (oQ-tRNA). This chain is S-adenosylmethionine:tRNA ribosyltransferase-isomerase, found in Brucella anthropi (strain ATCC 49188 / DSM 6882 / CCUG 24695 / JCM 21032 / LMG 3331 / NBRC 15819 / NCTC 12168 / Alc 37) (Ochrobactrum anthropi).